A 419-amino-acid polypeptide reads, in one-letter code: Endochitinase 2 (419 aa).

A signal peptide spans 1-18 (MHHLRALVGVGLAGLAAG). One can recognise a GH18 domain in the interval 35–343 (AQNVVYWGQN…QQAKSILVNG (309 aa)). The N-linked (GlcNAc...) asparagine glycan is linked to Asn153. Catalysis depends on Glu173, which acts as the Proton donor. N-linked (GlcNAc...) asparagine glycosylation is found at Asn237 and Asn256. The disordered stretch occupies residues 343–390 (GAPCPSSGPPSSTPATAPAPTATTMPSSTSVSSPTASPTGGTVPQWGQ). The segment covering 355 to 384 (TPATAPAPTATTMPSSTSVSSPTASPTGGT) has biased composition (low complexity). The CBM1 domain occupies 383-419 (GTVPQWGQCGGEGYSGPTQCVPPYQCVKQGDWWSSCR).

The protein belongs to the glycosyl hydrolase 18 family. Chitinase class III subfamily.

The protein localises to the secreted. The catalysed reaction is Random endo-hydrolysis of N-acetyl-beta-D-glucosaminide (1-&gt;4)-beta-linkages in chitin and chitodextrins.. Secreted chitinase involved in the degradation of chitin, a component of the cell walls of fungi and exoskeletal elements of some animals (including worms and arthropods). Participates in the infection process and directly acts in the penetration process of the host cuticle. This Metarhizium anisopliae (Entomophthora anisopliae) protein is Endochitinase 2 (chi2).